We begin with the raw amino-acid sequence, 66 residues long: Large ribosomal subunit protein uL29 (66 aa).

Belongs to the universal ribosomal protein uL29 family.

The polypeptide is Large ribosomal subunit protein uL29 (Borreliella burgdorferi (strain ZS7) (Borrelia burgdorferi)).